A 1277-amino-acid chain; its full sequence is Myosin-1 (1277 aa).

Residues 1–13 are compositionally biased toward basic residues; the sequence is MAPSKKAGKKVTP. Residues 1-27 form a disordered region; sequence MAPSKKAGKKVTPKKAAGNNAKSKVAK. A Myosin motor domain is found at 39-718; it reads VGVTDMTLLT…TLFALETMRD (680 aa). 132–139 contributes to the ATP binding site; that stretch reads GESGAGKT. Phosphoserine is present on serine 360. Residues 407 to 489 form an actin-binding region; that stretch reads IIGILDIFGF…PGIFAALNDA (83 aa). The segment at 567-587 is disordered; sequence LFPDRPDPNSKKRPPTASDRI. 2 IQ domains span residues 722–742 and 743–768; these read HNMA…KHEC and ARRI…YGHQ. Positions 776–965 constitute a TH1 domain; it reads RRRFSLLSYR…TVHVPSGEPA (190 aa). Disordered stretches follow at residues 952–1072 and 1129–1259; these read YKSH…AEPE and PKAA…GPGQ. Low complexity predominate over residues 1015-1056; it reads PAVATPSVVSTPAAAAVVSKPKPAASTPAAVRAPAVTPAARS. The segment covering 1057 to 1068 has biased composition (pro residues); the sequence is VPPPPPPPPPAR. In terms of domain architecture, SH3 spans 1071 to 1129; sequence PEKEMYRAKFDFQGQEGEMSLTKDDEVELIEKDENGWWLVKKDGVEAWAPYNYLERIAP. Residues 1132–1142 show a composition bias toward pro residues; that stretch reads APAPPPPPARP. Polar residues-rich tracts occupy residues 1145–1159 and 1185–1197; these read TSTV…TTAD and AATT…SSRP. Residues 1204-1224 show a composition bias toward pro residues; that stretch reads VPPPVAAKPKPPVVAPKPGVP. Positions 1226-1240 are enriched in low complexity; it reads PGGKPALPTTARPAP. The segment covering 1241–1258 has biased composition (gly residues); the sequence is SGGGAAAGRLGGGGGGPG.

The protein belongs to the TRAFAC class myosin-kinesin ATPase superfamily. Myosin family. Post-translationally, phosphorylation of the TEDS site (Ser-360) is required for the polarization of the actin cytoskeleton. Phosphorylation probably activates the myosin-I ATPase activity.

It is found in the cytoplasm. The protein localises to the cytoskeleton. The protein resides in the actin patch. Functionally, type-I myosin implicated in the organization of the actin cytoskeleton. Required for proper actin cytoskeleton polarization. At the cell cortex, assembles in patch-like structures together with proteins from the actin-polymerizing machinery and promotes actin assembly. Functions as actin nucleation-promoting factor (NPF) for the Arp2/3 complex. The chain is Myosin-1 (MYO1) from Coprinopsis cinerea (strain Okayama-7 / 130 / ATCC MYA-4618 / FGSC 9003) (Inky cap fungus).